The primary structure comprises 427 residues: Enolase 2 (427 aa).

Residue Q165 coordinates (2R)-2-phosphoglycerate. Catalysis depends on E207, which acts as the Proton donor. Mg(2+) contacts are provided by D244, E287, and D314. (2R)-2-phosphoglycerate contacts are provided by K339, R368, S369, and K390. The active-site Proton acceptor is K339.

This sequence belongs to the enolase family. Component of the RNA degradosome, a multiprotein complex involved in RNA processing and mRNA degradation. Requires Mg(2+) as cofactor.

It is found in the cytoplasm. The protein resides in the secreted. The protein localises to the cell surface. The enzyme catalyses (2R)-2-phosphoglycerate = phosphoenolpyruvate + H2O. Its pathway is carbohydrate degradation; glycolysis; pyruvate from D-glyceraldehyde 3-phosphate: step 4/5. In terms of biological role, catalyzes the reversible conversion of 2-phosphoglycerate (2-PG) into phosphoenolpyruvate (PEP). It is essential for the degradation of carbohydrates via glycolysis. The chain is Enolase 2 from Pseudomonas syringae pv. syringae (strain B728a).